The following is a 143-amino-acid chain: uncharacterized protein (143 aa).

The protein resides in the cytoplasm. The protein localises to the nucleus. This is an uncharacterized protein from Schizosaccharomyces pombe (strain 972 / ATCC 24843) (Fission yeast).